Consider the following 478-residue polypeptide: Methionine aminopeptidase 2-1 (478 aa).

Positions 1 to 124 (MGSKSPEGHN…PRVPLSTLFP (124 aa)) are disordered. Residues 46–56 (NDDDDADDDEK) are compositionally biased toward acidic residues. Positions 92-104 (KKKKKRKRSKKKA) are enriched in basic residues. Position 230 (histidine 230) interacts with substrate. A divalent metal cation is bound by residues aspartate 251, aspartate 262, and histidine 331. Histidine 339 serves as a coordination point for substrate. 2 residues coordinate a divalent metal cation: glutamate 364 and glutamate 459.

This sequence belongs to the peptidase M24A family. Methionine aminopeptidase eukaryotic type 2 subfamily. Co(2+) is required as a cofactor. Requires Zn(2+) as cofactor. The cofactor is Mn(2+). It depends on Fe(2+) as a cofactor.

Its subcellular location is the cytoplasm. The enzyme catalyses Release of N-terminal amino acids, preferentially methionine, from peptides and arylamides.. In terms of biological role, cotranslationally removes the N-terminal methionine from nascent proteins. The N-terminal methionine is often cleaved when the second residue in the primary sequence is small and uncharged (Met-Ala-, Cys, Gly, Pro, Ser, Thr, or Val). The protein is Methionine aminopeptidase 2-1 of Aspergillus clavatus (strain ATCC 1007 / CBS 513.65 / DSM 816 / NCTC 3887 / NRRL 1 / QM 1276 / 107).